Reading from the N-terminus, the 587-residue chain is Serine/threonine-protein phosphatase 2A 65 kDa regulatory subunit A beta isoform (587 aa).

Serine 2 carries the post-translational modification N-acetylserine. HEAT repeat units lie at residues 2 to 42 (SMID…ALGE), 44 to 80 (RTRKELIPFLSENNDDDDEVLLAMAEELGVFIPYVGG), 81 to 119 (VEYAHVLLPPLETLSTVEETCVREKAVESLCRVGSQMRE), 158 to 196 (DMLKTELRSLYTQLCQDDMPMVRRAAATNLGKFAATVES), 197 to 235 (AHLKTDVMSMFEDLTQDDQDSVRLLAVEGCAALGKLLEP), 236 to 274 (QDCVQHILPVIVNFSQDKSWRVRYMVANQLYELCEAVGP), 275 to 313 (EPTRTELVPAYVRLLRDNEAEVRIAAAGKVTKFCRILNP), 315 to 352 (IAIQHILPCVKELSSDSSQHVRSALASVIMGMAPVLGK), 353 to 391 (DATIEHLLPIFLSLLKDEFPDVRLNIISKLDQVNQVIGI), 393 to 430 (LLSQSLLPAIVELAEDRHWRVRLAIIEYIPLLASQLGV), 432 to 469 (FFDDKLGALCMQWLQDKVHSIRDAAANNLKRLAEEFGP), 470 to 508 (EWAMQHIVPQVLEMVNNPHYLYRMTILRAVSLLAPVMGS), 509 to 547 (EITCSKLLPVVMTASKDRVPNIKFNVAKVLQSLIPIVDQ), and 549 to 586 (VVEKTIRPGLVELSEDPDVDVRFFANQALQSIDNVMMS).

This sequence belongs to the phosphatase 2A regulatory subunit A family. In terms of assembly, PP2A consists of a common heterodimeric core enzyme, composed of a 36 kDa catalytic subunit (subunit C) and a 65 kDa constant regulatory subunit (subunit A), that associates with a variety of regulatory subunits such as subunits B (the R2/B/PR55/B55, R3/B''/PR72/PR130/PR59 and R5/B'/B56 families). Interacts with B'THETA. Interacts with SRK2E/OST1. Interacts with SIC/RON3. Ubiquitous, with higher levels in roots and flowers (at protein level).

It is found in the cytoplasm. The protein resides in the cytosol. The protein localises to the nucleus. It localises to the peroxisome. In terms of biological role, the A subunit of protein phosphatase 2A serves as a scaffolding molecule to coordinate the assembly of the catalytic subunit and a variable regulatory B subunit. Involved during developmental process such as seedling and floral developments. Seems to act as a negative regulator of PP2A catalytic activity. Associates with the serine/threonine-protein phosphatase PP2A catalytic subunit C and regulatory subunit B' to positively regulates beta-oxidation of fatty acids and protoauxins in peroxisomes by dephosphorylating peroxisomal beta-oxidation-related proteins. In Arabidopsis thaliana (Mouse-ear cress), this protein is Serine/threonine-protein phosphatase 2A 65 kDa regulatory subunit A beta isoform (PP2AA2).